The chain runs to 49 residues: Large ribosomal subunit protein bL33B (49 aa).

This sequence belongs to the bacterial ribosomal protein bL33 family.

Functionally, plays a role in sporulation at high temperatures. The chain is Large ribosomal subunit protein bL33B (rpmGB) from Bacillus subtilis (strain 168).